Reading from the N-terminus, the 159-residue chain is Ribosomal RNA large subunit methyltransferase H (159 aa).

S-adenosyl-L-methionine is bound by residues leucine 76, glycine 108, and 127 to 132; that span reads FSKMTF.

Belongs to the RNA methyltransferase RlmH family. Homodimer.

The protein localises to the cytoplasm. It catalyses the reaction pseudouridine(1915) in 23S rRNA + S-adenosyl-L-methionine = N(3)-methylpseudouridine(1915) in 23S rRNA + S-adenosyl-L-homocysteine + H(+). Its function is as follows. Specifically methylates the pseudouridine at position 1915 (m3Psi1915) in 23S rRNA. This chain is Ribosomal RNA large subunit methyltransferase H, found in Clostridium botulinum (strain Langeland / NCTC 10281 / Type F).